We begin with the raw amino-acid sequence, 572 residues long: MAKFNKKKLPSRHTSLGADRAPHRSFYYAMGETEKDVAKPFVGVVSTWNEAAPCNIALMRQAQSVKKGVRASGGTPREFCTITVTDGIAMGHEGMKSSLISREVIADSTELTVRGHCYDALVGIAGCDKSLPALMMAMVRLNVPSVFIYGGSILPGQYKGKDVTVVDVFEAVGKHSAGKMSAKELRKLELVACPSAGACGGQFTANTMACVSEAIGLALPYSAGTPAPYEERDKYALLSGKTVMNLLQKNIRPRDIVTKKSLENAATIVAATGGSTNAALHLPAIANEIGIKFDLMDVAKIFKKTPYLADLKPGGKYVAKDMWLAGGVPMLLKTLFDGGFIHGDCMTVTGKTMKQNLKNIKFNPKQKVLRAYDNPLSPDGGVVGLKGNLAPDGGIVKIAGLKKLQFTGKARCFDNEEAAMACVQKKKYKAGDVIIIRYEGPVGGPGMREMLSTTGAIYGQGMGEKVALITDGRFSGATRGFCVGHVGPEAALGGPLALLRNGDVIDIDAKKGTINVRLTKSQLATRHKKWKAKKSSFGSGTIWKYAQTVGPAYLGAPTHPGKRKEVKVYADI.

C54 is a binding site for [2Fe-2S] cluster. Position 86 (D86) interacts with Mg(2+). C127 provides a ligand contact to [2Fe-2S] cluster. Mg(2+) contacts are provided by D128 and K129. An N6-carboxylysine modification is found at K129. Residue C199 participates in [2Fe-2S] cluster binding. E449 contacts Mg(2+). S475 serves as the catalytic Proton acceptor.

This sequence belongs to the IlvD/Edd family. As to quaternary structure, homodimer. It depends on [2Fe-2S] cluster as a cofactor. Requires Mg(2+) as cofactor.

It catalyses the reaction (2R)-2,3-dihydroxy-3-methylbutanoate = 3-methyl-2-oxobutanoate + H2O. The catalysed reaction is (2R,3R)-2,3-dihydroxy-3-methylpentanoate = (S)-3-methyl-2-oxopentanoate + H2O. It participates in amino-acid biosynthesis; L-isoleucine biosynthesis; L-isoleucine from 2-oxobutanoate: step 3/4. The protein operates within amino-acid biosynthesis; L-valine biosynthesis; L-valine from pyruvate: step 3/4. Functionally, functions in the biosynthesis of branched-chain amino acids. Catalyzes the dehydration of (2R,3R)-2,3-dihydroxy-3-methylpentanoate (2,3-dihydroxy-3-methylvalerate) into 2-oxo-3-methylpentanoate (2-oxo-3-methylvalerate) and of (2R)-2,3-dihydroxy-3-methylbutanoate (2,3-dihydroxyisovalerate) into 2-oxo-3-methylbutanoate (2-oxoisovalerate), the penultimate precursor to L-isoleucine and L-valine, respectively. The sequence is that of Dihydroxy-acid dehydratase from Pelagibacter ubique (strain HTCC1062).